Consider the following 465-residue polypeptide: tRNA modification GTPase MnmE (465 aa).

R23, E81, and K120 together coordinate (6S)-5-formyl-5,6,7,8-tetrahydrofolate. In terms of domain architecture, TrmE-type G spans G217–G389. N227 is a K(+) binding site. GTP contacts are provided by residues N227–S232, T246–T252, and D271–G274. S231 serves as a coordination point for Mg(2+). T246, V248, and T251 together coordinate K(+). Residue T252 coordinates Mg(2+). K465 lines the (6S)-5-formyl-5,6,7,8-tetrahydrofolate pocket.

The protein belongs to the TRAFAC class TrmE-Era-EngA-EngB-Septin-like GTPase superfamily. TrmE GTPase family. Homodimer. Heterotetramer of two MnmE and two MnmG subunits. K(+) is required as a cofactor.

It is found in the cytoplasm. Functionally, exhibits a very high intrinsic GTPase hydrolysis rate. Involved in the addition of a carboxymethylaminomethyl (cmnm) group at the wobble position (U34) of certain tRNAs, forming tRNA-cmnm(5)s(2)U34. The chain is tRNA modification GTPase MnmE from Psychrobacter sp. (strain PRwf-1).